The chain runs to 607 residues: Glutamyl-tRNA(Gln) amidotransferase subunit E (607 aa).

It belongs to the GatB/GatE family. GatE subfamily. Heterodimer of GatD and GatE.

It catalyses the reaction L-glutamyl-tRNA(Gln) + L-glutamine + ATP + H2O = L-glutaminyl-tRNA(Gln) + L-glutamate + ADP + phosphate + H(+). In terms of biological role, allows the formation of correctly charged Gln-tRNA(Gln) through the transamidation of misacylated Glu-tRNA(Gln) in organisms which lack glutaminyl-tRNA synthetase. The reaction takes place in the presence of glutamine and ATP through an activated gamma-phospho-Glu-tRNA(Gln). The GatDE system is specific for glutamate and does not act on aspartate. The protein is Glutamyl-tRNA(Gln) amidotransferase subunit E of Pyrobaculum islandicum (strain DSM 4184 / JCM 9189 / GEO3).